A 201-amino-acid chain; its full sequence is Dephospho-CoA kinase (201 aa).

In terms of domain architecture, DPCK spans 4–201 (AFFVTASIAC…VIQEISKGKM (198 aa)). Residue 12-17 (ACGKST) coordinates ATP.

This sequence belongs to the CoaE family.

It is found in the cytoplasm. The catalysed reaction is 3'-dephospho-CoA + ATP = ADP + CoA + H(+). The protein operates within cofactor biosynthesis; coenzyme A biosynthesis; CoA from (R)-pantothenate: step 5/5. In terms of biological role, catalyzes the phosphorylation of the 3'-hydroxyl group of dephosphocoenzyme A to form coenzyme A. This chain is Dephospho-CoA kinase, found in Campylobacter jejuni (strain RM1221).